The following is a 193-amino-acid chain: Xanthine phosphoribosyltransferase (193 aa).

Xanthine contacts are provided by leucine 20 and asparagine 27. Position 129 to 133 (129 to 133 (ANGKA)) interacts with 5-phospho-alpha-D-ribose 1-diphosphate. Lysine 157 serves as a coordination point for xanthine.

This sequence belongs to the purine/pyrimidine phosphoribosyltransferase family. Xpt subfamily. As to quaternary structure, homodimer.

The protein resides in the cytoplasm. It carries out the reaction XMP + diphosphate = xanthine + 5-phospho-alpha-D-ribose 1-diphosphate. It participates in purine metabolism; XMP biosynthesis via salvage pathway; XMP from xanthine: step 1/1. Functionally, converts the preformed base xanthine, a product of nucleic acid breakdown, to xanthosine 5'-monophosphate (XMP), so it can be reused for RNA or DNA synthesis. The chain is Xanthine phosphoribosyltransferase from Bifidobacterium longum (strain NCC 2705).